We begin with the raw amino-acid sequence, 452 residues long: Major royal jelly protein 2 (452 aa).

Residues 1–17 (MTRWLFMVACLGIACQG) form the signal peptide. N-linked (GlcNAc...) asparagine glycosylation is found at Asn-145 and Asn-178. The disordered stretch occupies residues 416-452 (NNNQNDNIQNTNNQNDNNQKNNKKNANNQKNNNQNDN).

Post-translationally, N-linked core structure contains mannose (which consists of 8-alpha-mannosyl residues, one beta-mannosyl residue, and chitobiose). In terms of tissue distribution, secreted from the hypopharyngeal glands of the worker honey bee (at protein level); expression peaks at 12 days post eclosion. Expressed in the brains of adult worker bees peaking at 12 days post eclosion (at protein level). Expressed in the spermatheca of adult queen bees (at protein level); Expression levels are higher in mated queens than in virgin queens.

The protein resides in the secreted. In terms of biological role, highly abundant protein component of royal jelly, a substance produced in the hypopharyngeal gland containing proteins, free amino acids, fatty acids, sugars and other nutrients, which is fed to developing larvae by worker nurse bees. Major royal jelly proteins (MRJPs) are high in essential amino acids and probably have a nutritional function in larval food. All larvae are fed some royal jelly (also known as worker jelly) early in their development but it forms the principal source of nutrition for larvae destined to become queen bees. Produced in the spermatheca of adult queen bees, along with other major royal jelly proteins, where it may act as a nutrient supply for sperm stored by mated queens, or be involved in energy metabolism. The protein is Major royal jelly protein 2 of Apis mellifera (Honeybee).